A 151-amino-acid polypeptide reads, in one-letter code: Aspartate carbamoyltransferase regulatory chain (151 aa).

Zn(2+) contacts are provided by Cys108, Cys113, Cys138, and Cys141.

It belongs to the PyrI family. In terms of assembly, contains catalytic and regulatory chains. It depends on Zn(2+) as a cofactor.

In terms of biological role, involved in allosteric regulation of aspartate carbamoyltransferase. The protein is Aspartate carbamoyltransferase regulatory chain of Pyrobaculum neutrophilum (strain DSM 2338 / JCM 9278 / NBRC 100436 / V24Sta) (Thermoproteus neutrophilus).